The sequence spans 412 residues: Orcinol synthase (412 aa).

Residues Cys164, His322, and Asn355 contribute to the active site.

This sequence belongs to the thiolase-like superfamily. Chalcone/stilbene synthases family. As to quaternary structure, homodimer. As to expression, mainly expressed in young leaves, and barely in mature leaves and twigs.

The enzyme catalyses 3 malonyl-CoA + acetyl-CoA + 3 H(+) = orcinol + 4 CO2 + 4 CoA. It catalyses the reaction 3 malonyl-CoA + acetyl-CoA + 2 H(+) = orsellinate + 3 CO2 + 4 CoA. It carries out the reaction 3 malonyl-CoA + acetyl-CoA + 3 H(+) = tetraacetate lactone + 3 CO2 + 4 CoA. The catalysed reaction is 2 malonyl-CoA + acetyl-CoA + 2 H(+) = triacetate lactone + 2 CO2 + 3 CoA. The enzyme catalyses 3 malonyl-CoA + acetyl-CoA + 3 H(+) = 2-acetylphloroglucinol + 3 CO2 + 4 CoA. The protein operates within secondary metabolite biosynthesis; terpenoid biosynthesis. Its function is as follows. Involved in the biosynthesis of acetate-derived aromatic tetraketides natural products, precursors of daurichromenic acid, an anti-human immunodeficiency viruses (HIV) meroterpenoid consisting of sesquiterpene and orsellinic acid (OSA) moieties. Accepts acetyl-CoA as starter substrate and produces orcinol as the major reaction product, along with four minor products including OSA, tetraacetate lactone, triacetate lactone and 2-acetylphloroglucinol. The chain is Orcinol synthase from Rhododendron dauricum (Azalea daurica).